A 68-amino-acid polypeptide reads, in one-letter code: MAKKTTEAKKTVTVEQIGSPIRRPAIQRQTLVGLGLNKMHRQRTLEDTPAVRGMIRAVQHLVRVVDEK.

The protein belongs to the universal ribosomal protein uL30 family. In terms of assembly, part of the 50S ribosomal subunit.

This chain is Large ribosomal subunit protein uL30, found in Agrobacterium fabrum (strain C58 / ATCC 33970) (Agrobacterium tumefaciens (strain C58)).